Consider the following 253-residue polypeptide: Ubiquinone biosynthesis O-methyltransferase (253 aa).

4 residues coordinate S-adenosyl-L-methionine: R47, G78, D99, and M141.

Belongs to the methyltransferase superfamily. UbiG/COQ3 family.

The enzyme catalyses a 3-demethylubiquinol + S-adenosyl-L-methionine = a ubiquinol + S-adenosyl-L-homocysteine + H(+). The catalysed reaction is a 3-(all-trans-polyprenyl)benzene-1,2-diol + S-adenosyl-L-methionine = a 2-methoxy-6-(all-trans-polyprenyl)phenol + S-adenosyl-L-homocysteine + H(+). The protein operates within cofactor biosynthesis; ubiquinone biosynthesis. Functionally, O-methyltransferase that catalyzes the 2 O-methylation steps in the ubiquinone biosynthetic pathway. This Rhodopseudomonas palustris (strain BisB5) protein is Ubiquinone biosynthesis O-methyltransferase.